The following is a 168-amino-acid chain: Disulfide bond formation protein B 1 (168 aa).

The Cytoplasmic portion of the chain corresponds to 1-14; that stretch reads MNEQTSRLNRERRF. Residues 15–31 form a helical membrane-spanning segment; that stretch reads LVLLGLICLSLIGGALY. Residues 32–49 are Periplasmic-facing; that stretch reads MQVVLGEAPCPLCILQRY. C41 and C44 are joined by a disulfide. A helical membrane pass occupies residues 50-65; sequence ALLFIAVFAFIAAAMP. Over 66–72 the chain is Cytoplasmic; sequence GRRSLTF. The helical transmembrane segment at 73-89 threads the bilayer; that stretch reads FEALVVLSAIGGIVAAG. Over 90–144 the chain is Periplasmic; sequence NHVYILANPMVSCGIDTLQPIVDDLPLAKLWPLAFQVDGFCSTPYPPILGLSLAQ. Residues C102 and C130 are joined by a disulfide bond. A helical membrane pass occupies residues 145 to 163; that stretch reads WALVAFVLTAVLVPLGIYR. The Cytoplasmic segment spans residues 164–168; the sequence is NRRQA.

The protein belongs to the DsbB family.

It is found in the cell inner membrane. In terms of biological role, required for disulfide bond formation in some periplasmic proteins. Acts by oxidizing the DsbA protein. This Pseudomonas putida (strain ATCC 47054 / DSM 6125 / CFBP 8728 / NCIMB 11950 / KT2440) protein is Disulfide bond formation protein B 1 (dsbB1).